A 271-amino-acid polypeptide reads, in one-letter code: Formamidopyrimidine-DNA glycosylase (271 aa).

Pro2 functions as the Schiff-base intermediate with DNA in the catalytic mechanism. Glu3 serves as the catalytic Proton donor. Lys58 functions as the Proton donor; for beta-elimination activity in the catalytic mechanism. Residues His92, Arg111, and Lys152 each coordinate DNA. The FPG-type zinc-finger motif lies at 237–271 (YVYGKVQKPCKICNNIITLIRQNGRSTYFCNACQN). Arg261 serves as the catalytic Proton donor; for delta-elimination activity.

Belongs to the FPG family. Monomer. Zn(2+) serves as cofactor.

It catalyses the reaction Hydrolysis of DNA containing ring-opened 7-methylguanine residues, releasing 2,6-diamino-4-hydroxy-5-(N-methyl)formamidopyrimidine.. The enzyme catalyses 2'-deoxyribonucleotide-(2'-deoxyribose 5'-phosphate)-2'-deoxyribonucleotide-DNA = a 3'-end 2'-deoxyribonucleotide-(2,3-dehydro-2,3-deoxyribose 5'-phosphate)-DNA + a 5'-end 5'-phospho-2'-deoxyribonucleoside-DNA + H(+). Involved in base excision repair of DNA damaged by oxidation or by mutagenic agents. Acts as a DNA glycosylase that recognizes and removes damaged bases. Has a preference for oxidized purines, such as 7,8-dihydro-8-oxoguanine (8-oxoG). Has AP (apurinic/apyrimidinic) lyase activity and introduces nicks in the DNA strand. Cleaves the DNA backbone by beta-delta elimination to generate a single-strand break at the site of the removed base with both 3'- and 5'-phosphates. The polypeptide is Formamidopyrimidine-DNA glycosylase (Wolbachia sp. subsp. Drosophila simulans (strain wRi)).